A 463-amino-acid chain; its full sequence is Fumarate hydratase class II (463 aa).

Substrate contacts are provided by residues 97–99 (SGT), Arg-125, 128–131 (HPND), 138–140 (SSN), and Thr-186. Over residues 121 to 134 (RGEGRKVHPNDHVN) the composition is skewed to basic and acidic residues. The tract at residues 121 to 142 (RGEGRKVHPNDHVNRGQSSNDT) is disordered. The active-site Proton donor/acceptor is the His-187. Residue Ser-317 is part of the active site. Substrate contacts are provided by residues Ser-318 and 323 to 325 (KVN).

This sequence belongs to the class-II fumarase/aspartase family. Fumarase subfamily. As to quaternary structure, homotetramer.

It is found in the cytoplasm. It carries out the reaction (S)-malate = fumarate + H2O. It participates in carbohydrate metabolism; tricarboxylic acid cycle; (S)-malate from fumarate: step 1/1. Functionally, involved in the TCA cycle. Catalyzes the stereospecific interconversion of fumarate to L-malate. This chain is Fumarate hydratase class II, found in Bordetella bronchiseptica (strain ATCC BAA-588 / NCTC 13252 / RB50) (Alcaligenes bronchisepticus).